Reading from the N-terminus, the 223-residue chain is Probable GTP-binding protein EngB (223 aa).

The region spanning 25 to 199 (TGVEIAFAGR…SRLLQDWFDE (175 aa)) is the EngB-type G domain. Residues 33–40 (GRSNAGKS), 60–64 (GRTQH), 78–81 (DLPG), 145–148 (TKAD), and 178–180 (FSS) contribute to the GTP site. Residues S40 and T62 each coordinate Mg(2+).

The protein belongs to the TRAFAC class TrmE-Era-EngA-EngB-Septin-like GTPase superfamily. EngB GTPase family. Mg(2+) is required as a cofactor.

Functionally, necessary for normal cell division and for the maintenance of normal septation. This is Probable GTP-binding protein EngB from Nitrosomonas eutropha (strain DSM 101675 / C91 / Nm57).